The primary structure comprises 254 residues: rRNA N-glycosylase sapovaccarin-S2 (254 aa).

Belongs to the ribosome-inactivating protein family. Type 1 RIP subfamily. Expressed in seeds; most abundant in the perisperm.

It carries out the reaction Endohydrolysis of the N-glycosidic bond at one specific adenosine on the 28S rRNA.. In terms of biological role, exhibits N-glycosylase activity. Catalyzes the release of one adenine from a ribosome. Acts as a ribosome-inactivating protein and inhibits protein synthesis. Induces cell death in Huh-7 liver cells. May contribute to the protection against plant pests and predators or play a role in regulating the death of plant cells. This is rRNA N-glycosylase sapovaccarin-S2 from Gypsophila vaccaria (Cow soapwort).